The following is an 85-amino-acid chain: Sec-independent protein translocase protein TatA (85 aa).

The helical transmembrane segment at 1 to 21 threads the bilayer; sequence MGGISIWQLLIIALIVVLLFG. The tract at residues 43 to 85 is disordered; sequence MSSEEDKKALEDAEAAKPVQTAQTAQPTQQATEKKPESNKEQA. The span at 46 to 57 shows a compositional bias: basic and acidic residues; sequence EEDKKALEDAEA. Positions 58-73 are enriched in low complexity; sequence AKPVQTAQTAQPTQQA. Over residues 74–85 the composition is skewed to basic and acidic residues; that stretch reads TEKKPESNKEQA.

This sequence belongs to the TatA/E family. The Tat system comprises two distinct complexes: a TatABC complex, containing multiple copies of TatA, TatB and TatC subunits, and a separate TatA complex, containing only TatA subunits. Substrates initially bind to the TatABC complex, which probably triggers association of the separate TatA complex to form the active translocon.

The protein resides in the cell inner membrane. Functionally, part of the twin-arginine translocation (Tat) system that transports large folded proteins containing a characteristic twin-arginine motif in their signal peptide across membranes. TatA could form the protein-conducting channel of the Tat system. This chain is Sec-independent protein translocase protein TatA, found in Shewanella sp. (strain MR-4).